A 185-amino-acid chain; its full sequence is ATP-dependent protease subunit HslV (185 aa).

Residue threonine 14 is part of the active site. Positions 168, 171, and 174 each coordinate Na(+).

Belongs to the peptidase T1B family. HslV subfamily. A double ring-shaped homohexamer of HslV is capped on each side by a ring-shaped HslU homohexamer. The assembly of the HslU/HslV complex is dependent on binding of ATP.

The protein resides in the cytoplasm. The catalysed reaction is ATP-dependent cleavage of peptide bonds with broad specificity.. Allosterically activated by HslU binding. Its function is as follows. Protease subunit of a proteasome-like degradation complex believed to be a general protein degrading machinery. The polypeptide is ATP-dependent protease subunit HslV (Hyphomonas neptunium (strain ATCC 15444)).